The sequence spans 200 residues: Cytochrome c biogenesis ATP-binding export protein CcmA (200 aa).

Positions Leu3–Ala200 constitute an ABC transporter domain. Gly35–Thr42 is an ATP binding site.

This sequence belongs to the ABC transporter superfamily. CcmA exporter (TC 3.A.1.107) family. In terms of assembly, the complex is composed of two ATP-binding proteins (CcmA) and two transmembrane proteins (CcmB).

The protein localises to the cell inner membrane. It catalyses the reaction heme b(in) + ATP + H2O = heme b(out) + ADP + phosphate + H(+). Part of the ABC transporter complex CcmAB involved in the biogenesis of c-type cytochromes; once thought to export heme, this seems not to be the case, but its exact role is uncertain. Responsible for energy coupling to the transport system. This Rhodopseudomonas palustris (strain BisB5) protein is Cytochrome c biogenesis ATP-binding export protein CcmA.